The primary structure comprises 348 residues: UDP-3-O-acylglucosamine N-acyltransferase (348 aa).

The active-site Proton acceptor is His-237.

Belongs to the transferase hexapeptide repeat family. LpxD subfamily. In terms of assembly, homotrimer.

The catalysed reaction is a UDP-3-O-[(3R)-3-hydroxyacyl]-alpha-D-glucosamine + a (3R)-hydroxyacyl-[ACP] = a UDP-2-N,3-O-bis[(3R)-3-hydroxyacyl]-alpha-D-glucosamine + holo-[ACP] + H(+). It participates in bacterial outer membrane biogenesis; LPS lipid A biosynthesis. Its function is as follows. Catalyzes the N-acylation of UDP-3-O-acylglucosamine using 3-hydroxyacyl-ACP as the acyl donor. Is involved in the biosynthesis of lipid A, a phosphorylated glycolipid that anchors the lipopolysaccharide to the outer membrane of the cell. This is UDP-3-O-acylglucosamine N-acyltransferase from Geotalea daltonii (strain DSM 22248 / JCM 15807 / FRC-32) (Geobacter daltonii).